The following is a 314-amino-acid chain: Olfactory receptor 52H1 (314 aa).

The Extracellular portion of the chain corresponds to 1 to 32 (MIIFNLSSYNPGPFILVGIPGLEQFHVWIGIP). An N-linked (GlcNAc...) asparagine glycan is attached at N5. The helical transmembrane segment at 33-53 (FCIIYIVAVVGNCILLYLIVV) threads the bilayer. Over 54 to 59 (EHSLHE) the chain is Cytoplasmic. A helical transmembrane segment spans residues 60–80 (PMFFFLSMLAMTDLILSTAGV). Residues 81 to 101 (PKALSIFWLGAREITFPGCLT) are Extracellular-facing. C99 and C181 are joined by a disulfide. Residues 102 to 122 (QMFFLHYNFVLDSAILMAMAF) traverse the membrane as a helical segment. The Cytoplasmic portion of the chain corresponds to 123-149 (DHYVAICSPLRYTTILTPKTIIKSAMG). The chain crosses the membrane as a helical span at residues 150 to 170 (ISFRSFCIILPDVFLLTCLPF). Topologically, residues 171–197 (CRTRIIPHTYCEHIGVAQLACADISIN) are extracellular. The helical transmembrane segment at 198–218 (FWYGFCVPIMTVISDVILIAV) threads the bilayer. At 219 to 242 (SYAHILCAVFGLPSQDACQKALGT) the chain is on the cytoplasmic side. The chain crosses the membrane as a helical span at residues 243 to 263 (CGSHVCVILMFYTPAFFSILA). Residues 264–275 (HRFGHNVSRTFH) are Extracellular-facing. A glycan (N-linked (GlcNAc...) asparagine) is linked at N269. A helical transmembrane segment spans residues 276–296 (IMFANLYIVIPPALNPMVYGV). Topologically, residues 297-314 (KTKQIRDKVILLFSKGTG) are cytoplasmic.

It belongs to the G-protein coupled receptor 1 family.

The protein localises to the membrane. Functionally, odorant receptor. This chain is Olfactory receptor 52H1 (OR52H1), found in Homo sapiens (Human).